The chain runs to 147 residues: FAD synthase (147 aa).

ATP contacts are provided by residues 13–14 (TF), 18–21 (HEGH), aspartate 100, and phenylalanine 127.

Belongs to the archaeal FAD synthase family. As to quaternary structure, homodimer. It depends on a divalent metal cation as a cofactor.

It carries out the reaction FMN + ATP + H(+) = FAD + diphosphate. It functions in the pathway cofactor biosynthesis; FAD biosynthesis; FAD from FMN: step 1/1. In terms of biological role, catalyzes the transfer of the AMP portion of ATP to flavin mononucleotide (FMN) to produce flavin adenine dinucleotide (FAD) coenzyme. This is FAD synthase from Korarchaeum cryptofilum (strain OPF8).